The chain runs to 151 residues: Large ribosomal subunit protein bL9 (151 aa).

Belongs to the bacterial ribosomal protein bL9 family.

In terms of biological role, binds to the 23S rRNA. This is Large ribosomal subunit protein bL9 from Prochlorococcus marinus (strain MIT 9515).